The sequence spans 92 residues: Small ribosomal subunit protein uS19c (92 aa).

This sequence belongs to the universal ribosomal protein uS19 family.

Its subcellular location is the plastid. The protein localises to the chloroplast. Functionally, protein S19 forms a complex with S13 that binds strongly to the 16S ribosomal RNA. The polypeptide is Small ribosomal subunit protein uS19c (Nasturtium officinale (Watercress)).